Reading from the N-terminus, the 599-residue chain is Beta-glucuronidase (599 aa).

The D-glucuronate site is built by D160 and N407. E408 acts as the Proton donor in catalysis. D-glucuronate-binding residues include N462, Y468, E501, W546, and K565. The active-site Nucleophile is E501. Residues 563–565 (NHK) carry the N-K motif motif.

Belongs to the glycosyl hydrolase 2 family.

The enzyme catalyses a beta-D-glucuronoside + H2O = D-glucuronate + an alcohol. Its activity is regulated as follows. Inhibited by a set of synthetic compounds like thio-urea derivatives and analogs. Inhibitors of gut microbial beta-glucuronidases are expected to block the reactivation of glucuronidated cancer drugs, and to alleviate drug-induced GI toxicity. Its function is as follows. Displays beta-glucuronidase activity with the artificial substrate p-nitrophenyl-beta-D-glucuronide (PNPG). Is likely capable of scavenging glucuronate from a range of chemically distinct xenobiotic and endobiotic glucuronides present in the gastrointestinal (GI) tract, to be able to utilize these diverse sources of carbon. As part of the GI microbiome, this enzyme would be able to reactivate glucuronide drug conjugates, such reactivated compounds can significantly damage the GI tract. This is Beta-glucuronidase from Streptococcus agalactiae serotype V (strain ATCC BAA-611 / 2603 V/R).